A 106-amino-acid chain; its full sequence is Large ribosomal subunit protein bL21 (106 aa).

This sequence belongs to the bacterial ribosomal protein bL21 family. Part of the 50S ribosomal subunit. Contacts protein L20.

This protein binds to 23S rRNA in the presence of protein L20. The chain is Large ribosomal subunit protein bL21 from Coprothermobacter proteolyticus (strain ATCC 35245 / DSM 5265 / OCM 4 / BT).